Consider the following 348-residue polypeptide: uncharacterized protein (348 aa).

The tract at residues 132 to 348 (SECRRSSDAL…QGTRRDSARL (217 aa)) is disordered. Positions 161–178 (STAPIPNAAISSARSSAR) are enriched in low complexity. Over residues 192–207 (SRSSSETRSPGGTVQP) the composition is skewed to polar residues. Residues 227-273 (AAGSLLPAPRPPASSASSPQAAAPAAPSATRLPRRTTPSAPRPSSRP) show a composition bias toward low complexity. The segment covering 274 to 287 (ARPPIPAARPPPRR) has biased composition (pro residues). Residues 288-310 (TPGTPRPAAARARAPAGCSPARR) are compositionally biased toward low complexity.

This is an uncharacterized protein from Streptomyces fradiae (Streptomyces roseoflavus).